The following is a 204-amino-acid chain: Protein Nef (204 aa).

The interval 1-33 (MGGKWSKRRAEGWQTIRERMRRAEPAEPAADGV) is disordered. Glycine 2 carries the N-myristoyl glycine; by host lipid modification. Serine 6 is modified (phosphoserine; by host). A compositionally biased stretch (basic and acidic residues) spans 8 to 25 (RRAEGWQTIRERMRRAEP). The segment at 63–66 (EEGE) is acidic; interacts with host PACS1 and PACS2; stabilizes the interaction of NEF/MHC-I with host AP1M1; necessary for MHC-I internalization. The interval 70–79 (PVRPQVPLRP) is SH3-binding; interaction with Src family tyrosine kinases. The PxxP; stabilizes the interaction of NEF/MHC-I with host AP1M1; necessary for MHC-I internalization signature appears at 73 to 76 (PQVP). Residues 109–125 (DILDLWVYHTQGFFPDW) form a mediates dimerization, Nef-PTE1 interaction region. Positions 149–179 (VEPDEGENNREDNSLLHPANQHGVEDSERQV) are binding to ATP6V1H. Positions 163-164 (LL) match the Dileucine internalization motif; necessary for CD4 internalization motif. The Diacidic; necessary for CD4 internalization signature appears at 173–174 (ED).

This sequence belongs to the lentivirus primate group Nef protein family. Monomer; cytosolic form. Homodimer; membrane bound form. Interacts with Nef associated p21-activated kinase (PAK2); this interaction activates PAK2. Associates with the Nef-MHC-I-AP1 complex; this complex is required for MHC-I internalization. Interacts (via C-terminus) with host PI3-kinase. Interacts with host PACS1; this interaction seems to be weak. Interacts with host PACS2. Interacts with host LCK and MAPK3; these interactions inhibit the kinase activity of the latter. Interacts with host ATP6V1H; this interaction may play a role in CD4 endocytosis. Associates with the CD4-Nef-AP2 complex; this complex is required for CD4 internalization. Interacts with host AP2 subunit alpha and AP2 subunit sigma2. Interacts with TCR-zeta chain; this interaction up-regulates the Fas ligand (FasL) surface expression. Interacts with host HCK, LYN, and SRC; these interactions activate the Src family kinases. Interacts with MAP3K5; this interaction inhibits the Fas and TNFR-mediated death signals. Interacts with beta-COP and PTE1. Interacts with human RACK1; this increases Nef phosphorylation by PKC. Interacts with TP53; this interaction decreases the half-life of TP53, protecting the infected cell against p53-mediated apoptosis. The virion-associated Nef proteins are cleaved by the viral protease to release the soluble C-terminal core protein. Nef is probably cleaved concomitantly with viral structural proteins on maturation of virus particles. In terms of processing, myristoylated. Post-translationally, phosphorylated on serine residues, probably by host PKCdelta and theta.

It is found in the host cell membrane. The protein resides in the virion. Its subcellular location is the secreted. It localises to the host Golgi apparatus membrane. In terms of biological role, factor of infectivity and pathogenicity, required for optimal virus replication. Alters numerous pathways of T-lymphocyte function and down-regulates immunity surface molecules in order to evade host defense and increase viral infectivity. Alters the functionality of other immunity cells, like dendritic cells, monocytes/macrophages and NK cells. In infected CD4(+) T-lymphocytes, down-regulates the surface MHC-I, mature MHC-II, CD4, CD28, CCR5 and CXCR4 molecules. Mediates internalization and degradation of host CD4 through the interaction of with the cytoplasmic tail of CD4, the recruitment of AP-2 (clathrin adapter protein complex 2), internalization through clathrin coated pits, and subsequent transport to endosomes and lysosomes for degradation. Diverts host MHC-I molecules to the trans-Golgi network-associated endosomal compartments by an endocytic pathway to finally target them for degradation. MHC-I down-regulation may involve AP-1 (clathrin adapter protein complex 1) or possibly Src family kinase-ZAP70/Syk-PI3K cascade recruited by PACS2. In consequence infected cells are masked for immune recognition by cytotoxic T-lymphocytes. Decreasing the number of immune receptors also prevents reinfection by more HIV particles (superinfection). Down-regulates host SERINC3 and SERINC5 thereby excluding these proteins from the viral particles. Virion infectivity is drastically higher when SERINC3 or SERINC5 are excluded from the viral envelope, because these host antiviral proteins impair the membrane fusion event necessary for subsequent virion penetration. Its function is as follows. Bypasses host T-cell signaling by inducing a transcriptional program nearly identical to that of anti-CD3 cell activation. Interaction with TCR-zeta chain up-regulates the Fas ligand (FasL). Increasing surface FasL molecules and decreasing surface MHC-I molecules on infected CD4(+) cells send attacking cytotoxic CD8+ T-lymphocytes into apoptosis. Functionally, plays a role in optimizing the host cell environment for viral replication without causing cell death by apoptosis. Protects the infected cells from apoptosis in order to keep them alive until the next virus generation is ready to strike. Inhibits the Fas and TNFR-mediated death signals by blocking MAP3K5/ASK1. Decreases the half-life of TP53, protecting the infected cell against p53-mediated apoptosis. Inhibits the apoptotic signals regulated by the Bcl-2 family proteins through the formation of a Nef/PI3-kinase/PAK2 complex that leads to activation of PAK2 and induces phosphorylation of host BAD. In terms of biological role, extracellular Nef protein targets CD4(+) T-lymphocytes for apoptosis by interacting with CXCR4 surface receptors. The polypeptide is Protein Nef (Human immunodeficiency virus type 1 group M subtype B (strain 89.6) (HIV-1)).